The primary structure comprises 422 residues: UDP-N-acetylglucosamine 1-carboxyvinyltransferase (422 aa).

22-23 provides a ligand contact to phosphoenolpyruvate; that stretch reads KN. Position 94 (R94) interacts with UDP-N-acetyl-alpha-D-glucosamine. C118 serves as the catalytic Proton donor. C118 is modified (2-(S-cysteinyl)pyruvic acid O-phosphothioketal). UDP-N-acetyl-alpha-D-glucosamine-binding positions include 123–127, D309, and I331; that span reads RPVDL.

Belongs to the EPSP synthase family. MurA subfamily.

The protein localises to the cytoplasm. The enzyme catalyses phosphoenolpyruvate + UDP-N-acetyl-alpha-D-glucosamine = UDP-N-acetyl-3-O-(1-carboxyvinyl)-alpha-D-glucosamine + phosphate. It functions in the pathway cell wall biogenesis; peptidoglycan biosynthesis. Its function is as follows. Cell wall formation. Adds enolpyruvyl to UDP-N-acetylglucosamine. The chain is UDP-N-acetylglucosamine 1-carboxyvinyltransferase from Cereibacter sphaeroides (strain ATCC 17023 / DSM 158 / JCM 6121 / CCUG 31486 / LMG 2827 / NBRC 12203 / NCIMB 8253 / ATH 2.4.1.) (Rhodobacter sphaeroides).